The primary structure comprises 229 residues: Large ribosomal subunit protein uL1 (229 aa).

This sequence belongs to the universal ribosomal protein uL1 family. As to quaternary structure, part of the 50S ribosomal subunit.

Its function is as follows. Binds directly to 23S rRNA. The L1 stalk is quite mobile in the ribosome, and is involved in E site tRNA release. Functionally, protein L1 is also a translational repressor protein, it controls the translation of the L11 operon by binding to its mRNA. The chain is Large ribosomal subunit protein uL1 from Gemmatimonas aurantiaca (strain DSM 14586 / JCM 11422 / NBRC 100505 / T-27).